The following is a 179-amino-acid chain: Large ribosomal subunit protein uL5 (179 aa).

The protein belongs to the universal ribosomal protein uL5 family. As to quaternary structure, part of the 50S ribosomal subunit; part of the 5S rRNA/L5/L18/L25 subcomplex. Contacts the 5S rRNA and the P site tRNA. Forms a bridge to the 30S subunit in the 70S ribosome.

This is one of the proteins that bind and probably mediate the attachment of the 5S RNA into the large ribosomal subunit, where it forms part of the central protuberance. In the 70S ribosome it contacts protein S13 of the 30S subunit (bridge B1b), connecting the 2 subunits; this bridge is implicated in subunit movement. Contacts the P site tRNA; the 5S rRNA and some of its associated proteins might help stabilize positioning of ribosome-bound tRNAs. The chain is Large ribosomal subunit protein uL5 from Edwardsiella ictaluri (strain 93-146).